Here is an 870-residue protein sequence, read N- to C-terminus: S-linalool synthase (870 aa).

Aspartate 547, aspartate 551, asparagine 689, serine 693, and glutamate 697 together coordinate Mg(2+). The DDXXD motif motif lies at aspartate 547–aspartate 551.

Belongs to the terpene synthase family. It depends on Mg(2+) as a cofactor. The cofactor is Mn(2+). As to expression, highly expressed in cells of the transmitting tract of the stigma and style and in the epidermal cells of petals, as well as in stamens.

The catalysed reaction is (2E)-geranyl diphosphate + H2O = (S)-linalool + diphosphate. Functionally, involved in the biosynthesis of the acyclic monoterpene S-linalool, a major component of the strong sweet scent of the C.breweri flowers. The polypeptide is S-linalool synthase (LIS) (Clarkia breweri (Fairy fans)).